We begin with the raw amino-acid sequence, 608 residues long: Prolactin receptor (608 aa).

Positions 1–19 (MSSALAYMLLVLSISLLNG) are cleaved as a signal peptide. Topologically, residues 20–229 (QSPPGKPEIH…EIPNDFTLKD (210 aa)) are extracellular. Fibronectin type-III domains are found at residues 22-122 (PPGK…IVEP) and 124-224 (PPRN…IPND). C31 and C41 are joined by a disulfide. N54 carries N-linked (GlcNAc...) asparagine glycosylation. C70 and C81 are disulfide-bonded. N-linked (GlcNAc...) asparagine glycosylation is found at N99 and N127. Residues D206 and H207 each coordinate Zn(2+). Residues 210 to 214 (WSRWG) carry the WSXWS motif motif. Residues 230 to 253 (TTVWIIVAVLSAVICLIMVWAVAL) traverse the membrane as a helical segment. At 254–608 (KGYSMMTCIF…DPTCFMHSFH (355 aa)) the chain is on the cytoplasmic side. The Box 1 motif signature appears at 262 to 270 (IFPPVPGPK). 3 disordered regions span residues 317 to 355 (DERLMPSHSKEYPGQGVKPTHLDPDSDSGHGSYDSHSLL), 377 to 419 (KPEN…TRRS), and 466 to 487 (GAKSFPSDKQNTSWPPLQEKGP). Residues 318–327 (ERLMPSHSKE) show a composition bias toward basic and acidic residues. Low complexity predominate over residues 345–354 (GHGSYDSHSL). A compositionally biased stretch (polar residues) spans 398–408 (CHTDTSKSTTW).

The protein belongs to the type I cytokine receptor family. Type 1 subfamily. As to quaternary structure, interacts with SMARCA1. Interacts with NEK3 and VAV2 and this interaction is prolactin-dependent.

The protein localises to the membrane. Its function is as follows. This is a receptor for the anterior pituitary hormone prolactin. This chain is Prolactin receptor (Prlr), found in Mus musculus (Mouse).